A 602-amino-acid chain; its full sequence is ATP-dependent lipid A-core flippase 1 (602 aa).

The next 5 helical transmembrane spans lie at 36-56 (LGFVAAIIGMLGYAAIDVYFL), 80-100 (LFIIVAFTVRGIAHFIANYCL), 154-174 (ILTIVQQSAFIIGLLGLMFYY), 176-196 (WQLSLIFLLITPIIAVIVSVV), and 261-281 (ASVPIIQVIASFALAFVFYAI). Residues 39 to 321 (VAAIIGMLGY…LTNVNSEFQQ (283 aa)) enclose the ABC transmembrane type-1 domain. In terms of domain architecture, ABC transporter spans 362-599 (YKNTNTMTTS…QGAYAQLHSF (238 aa)). 398-405 (GRSGSGKS) contributes to the ATP binding site.

It belongs to the ABC transporter superfamily. Lipid exporter (TC 3.A.1.106) family. Homodimer.

It localises to the cell inner membrane. The catalysed reaction is ATP + H2O + lipid A-core oligosaccharideSide 1 = ADP + phosphate + lipid A-core oligosaccharideSide 2.. Functionally, involved in lipopolysaccharide (LPS) biosynthesis. Translocates lipid A-core from the inner to the outer leaflet of the inner membrane. Transmembrane domains (TMD) form a pore in the inner membrane and the ATP-binding domain (NBD) is responsible for energy generation. The sequence is that of ATP-dependent lipid A-core flippase 1 from Colwellia psychrerythraea (strain 34H / ATCC BAA-681) (Vibrio psychroerythus).